The primary structure comprises 268 residues: Methionine aminopeptidase (268 aa).

His-79 contacts substrate. A divalent metal cation-binding residues include Asp-97, Asp-108, and His-172. Position 179 (His-179) interacts with substrate. Positions 205 and 236 each coordinate a divalent metal cation.

Belongs to the peptidase M24A family. Methionine aminopeptidase type 1 subfamily. Monomer. Requires Co(2+) as cofactor. Zn(2+) is required as a cofactor. Mn(2+) serves as cofactor. The cofactor is Fe(2+).

The enzyme catalyses Release of N-terminal amino acids, preferentially methionine, from peptides and arylamides.. In terms of biological role, removes the N-terminal methionine from nascent proteins. The N-terminal methionine is often cleaved when the second residue in the primary sequence is small and uncharged (Met-Ala-, Cys, Gly, Pro, Ser, Thr, or Val). Requires deformylation of the N(alpha)-formylated initiator methionine before it can be hydrolyzed. This Haemophilus influenzae (strain ATCC 51907 / DSM 11121 / KW20 / Rd) protein is Methionine aminopeptidase.